A 770-amino-acid chain; its full sequence is Transferrin receptor protein 1 (770 aa).

Over 1–70 the chain is Cytoplasmic; the sequence is MMDQARSAFS…KPKRCNGFIC (70 aa). Positions 1–70 are mediates interaction with SH3BP4; the sequence is MMDQARSAFS…KPKRCNGFIC (70 aa). S10 and S19 each carry phosphoserine. Y20 carries the phosphotyrosine modification. The Endocytosis signal signature appears at 20–23; it reads YTRF. Residue T21 is modified to Phosphothreonine. The residue at position 24 (S24) is a Phosphoserine. A Stop-transfer sequence motif is present at residues 61-64; it reads KPKR. Residues C65 and C70 are each lipidated (S-palmitoyl cysteine). A helical; Signal-anchor for type II membrane protein membrane pass occupies residues 71–90; sequence YGTIAVVLFFLIGFMIGYLG. The Extracellular portion of the chain corresponds to 91–770; it reads YCKRVEPKAG…GDIWDIDNEF (680 aa). The tract at residues 102-122 is disordered; sequence ERPTGTEALGTERTEPSETEE. T107 carries O-linked (GalNAc...) threonine glycosylation. The PA domain maps to 233-323; sequence SKATTVTGRL…GTGDPYTPGF (91 aa). Residues N261, N327, and N384 are each glycosylated (N-linked (GlcNAc...) asparagine). The ligand-binding stretch occupies residues 579 to 770; that stretch reads TMDLYENLNQ…GDIWDIDNEF (192 aa). Residues 656–658 carry the Cell attachment site motif; that stretch reads RGD. N-linked (GlcNAc...) asparagine glycans are attached at residues N732 and N737.

The protein belongs to the peptidase M28 family. M28B subfamily. In terms of assembly, homodimer; disulfide-linked. Binds one transferrin molecule per subunit. Interacts with SH3BP4. Interacts with STEAP3; facilitates TFRC endocytosis in erythroid precursor cells. Stearoylated by ZDHHC6 which inhibits TFRC-mediated activation of the JNK pathway and promotes mitochondrial fragmentation. Stearoylation does not affect iron uptake. Post-translationally, N- and O-glycosylated, phosphorylated and palmitoylated.

It is found in the cell membrane. It localises to the melanosome. Its function is as follows. Cellular uptake of iron occurs via receptor-mediated endocytosis of ligand-occupied transferrin receptor into specialized endosomes. Endosomal acidification leads to iron release. The apotransferrin-receptor complex is then recycled to the cell surface with a return to neutral pH and the concomitant loss of affinity of apotransferrin for its receptor. Transferrin receptor is necessary for development of erythrocytes and the nervous system. Positively regulates T and B cell proliferation through iron uptake. Acts as a lipid sensor that regulates mitochondrial fusion by regulating activation of the JNK pathway. When dietary levels of stearate (C18:0) are low, promotes activation of the JNK pathway, resulting in HUWE1-mediated ubiquitination and subsequent degradation of the mitofusin MFN2 and inhibition of mitochondrial fusion. When dietary levels of stearate (C18:0) are high, TFRC stearoylation inhibits activation of the JNK pathway and thus degradation of the mitofusin MFN2. Mediates uptake of NICOL1 into fibroblasts where it may regulate extracellular matrix production. In Canis lupus familiaris (Dog), this protein is Transferrin receptor protein 1 (TFRC).